The chain runs to 65 residues: UPF0434 protein BBta_0300 (65 aa).

It belongs to the UPF0434 family.

This is UPF0434 protein BBta_0300 from Bradyrhizobium sp. (strain BTAi1 / ATCC BAA-1182).